Here is a 375-residue protein sequence, read N- to C-terminus: Probable trehalose-phosphate phosphatase 7 (375 aa).

It belongs to the trehalose phosphatase family. It depends on a divalent metal cation as a cofactor.

It carries out the reaction alpha,alpha-trehalose 6-phosphate + H2O = alpha,alpha-trehalose + phosphate. It participates in glycan biosynthesis; trehalose biosynthesis. Functionally, removes the phosphate from trehalose 6-phosphate to produce free trehalose. Trehalose accumulation in plant may improve abiotic stress tolerance. The polypeptide is Probable trehalose-phosphate phosphatase 7 (TPP7) (Oryza sativa subsp. japonica (Rice)).